The sequence spans 345 residues: Holliday junction branch migration complex subunit RuvB (345 aa).

The tract at residues 1 to 182 is large ATPase domain (RuvB-L); the sequence is MQRLVEVESV…FGMHFRMQFY (182 aa). Residues Leu21, Arg22, Gly63, Lys66, Thr67, Thr68, 129 to 131, Arg172, Tyr182, and Arg219 each bind ATP; that span reads EDY. Thr67 provides a ligand contact to Mg(2+). The tract at residues 183–253 is small ATPAse domain (RuvB-S); it reads TEIELAKIIQ…RCKYALDELG (71 aa). The interval 256-345 is head domain (RuvB-H); sequence ESGFDEMDIN…EDDLTQGKLF (90 aa). The DNA site is built by Arg310 and Arg315.

The protein belongs to the RuvB family. In terms of assembly, homohexamer. Forms an RuvA(8)-RuvB(12)-Holliday junction (HJ) complex. HJ DNA is sandwiched between 2 RuvA tetramers; dsDNA enters through RuvA and exits via RuvB. An RuvB hexamer assembles on each DNA strand where it exits the tetramer. Each RuvB hexamer is contacted by two RuvA subunits (via domain III) on 2 adjacent RuvB subunits; this complex drives branch migration. In the full resolvosome a probable DNA-RuvA(4)-RuvB(12)-RuvC(2) complex forms which resolves the HJ.

The protein localises to the cytoplasm. The catalysed reaction is ATP + H2O = ADP + phosphate + H(+). In terms of biological role, the RuvA-RuvB-RuvC complex processes Holliday junction (HJ) DNA during genetic recombination and DNA repair, while the RuvA-RuvB complex plays an important role in the rescue of blocked DNA replication forks via replication fork reversal (RFR). RuvA specifically binds to HJ cruciform DNA, conferring on it an open structure. The RuvB hexamer acts as an ATP-dependent pump, pulling dsDNA into and through the RuvAB complex. RuvB forms 2 homohexamers on either side of HJ DNA bound by 1 or 2 RuvA tetramers; 4 subunits per hexamer contact DNA at a time. Coordinated motions by a converter formed by DNA-disengaged RuvB subunits stimulates ATP hydrolysis and nucleotide exchange. Immobilization of the converter enables RuvB to convert the ATP-contained energy into a lever motion, pulling 2 nucleotides of DNA out of the RuvA tetramer per ATP hydrolyzed, thus driving DNA branch migration. The RuvB motors rotate together with the DNA substrate, which together with the progressing nucleotide cycle form the mechanistic basis for DNA recombination by continuous HJ branch migration. Branch migration allows RuvC to scan DNA until it finds its consensus sequence, where it cleaves and resolves cruciform DNA. The sequence is that of Holliday junction branch migration complex subunit RuvB from Aliarcobacter butzleri (strain RM4018) (Arcobacter butzleri).